We begin with the raw amino-acid sequence, 160 residues long: Sulfur-rich protein (160 aa).

2 consecutive transmembrane segments (helical) span residues isoleucine 63–leucine 83 and phenylalanine 92–methionine 112.

It localises to the membrane. In Chlamydophila psittaci (strain ATCC VR-125 / 6BC) (Chlamydia psittaci), this protein is Sulfur-rich protein (srp).